A 665-amino-acid chain; its full sequence is Macrolide export ATP-binding/permease protein MacB (665 aa).

Residues 17-255 (MQVKGLIREF…VAQFSSIIDK (239 aa)) form the ABC transporter domain. ATP is bound at residue 53-60 (GQSGSGKS). Helical transmembrane passes span 287 to 307 (LLTM…VGLG), 544 to 564 (IAII…LVSV), 588 to 608 (FLIE…GMAF), and 630 to 650 (SIIA…FLPA).

This sequence belongs to the ABC transporter superfamily. Macrolide exporter (TC 3.A.1.122) family. As to quaternary structure, homodimer. Part of the tripartite efflux system MacAB-TolC, which is composed of an inner membrane transporter, MacB, a periplasmic membrane fusion protein, MacA, and an outer membrane component, TolC. The complex forms a large protein conduit and can translocate molecules across both the inner and outer membranes. Interacts with MacA.

It localises to the cell inner membrane. Functionally, part of the tripartite efflux system MacAB-TolC. MacB is a non-canonical ABC transporter that contains transmembrane domains (TMD), which form a pore in the inner membrane, and an ATP-binding domain (NBD), which is responsible for energy generation. Confers resistance against macrolides. The protein is Macrolide export ATP-binding/permease protein MacB of Psychrobacter arcticus (strain DSM 17307 / VKM B-2377 / 273-4).